Reading from the N-terminus, the 276-residue chain is Thymidylate synthase (276 aa).

Arg-26 contributes to the dUMP binding site. His-56 is a binding site for (6R)-5,10-methylene-5,6,7,8-tetrahydrofolate. 131–132 (RR) is a binding site for dUMP. Cys-151 serves as the catalytic Nucleophile. Residues 178 to 181 (RSAD), Asn-189, and 219 to 221 (HIY) contribute to the dUMP site. Asp-181 provides a ligand contact to (6R)-5,10-methylene-5,6,7,8-tetrahydrofolate. A (6R)-5,10-methylene-5,6,7,8-tetrahydrofolate-binding site is contributed by Ala-275.

This sequence belongs to the thymidylate synthase family. Bacterial-type ThyA subfamily. As to quaternary structure, homodimer.

Its subcellular location is the cytoplasm. It catalyses the reaction dUMP + (6R)-5,10-methylene-5,6,7,8-tetrahydrofolate = 7,8-dihydrofolate + dTMP. It participates in pyrimidine metabolism; dTTP biosynthesis. In terms of biological role, catalyzes the reductive methylation of 2'-deoxyuridine-5'-monophosphate (dUMP) to 2'-deoxythymidine-5'-monophosphate (dTMP) while utilizing 5,10-methylenetetrahydrofolate (mTHF) as the methyl donor and reductant in the reaction, yielding dihydrofolate (DHF) as a by-product. This enzymatic reaction provides an intracellular de novo source of dTMP, an essential precursor for DNA biosynthesis. This is Thymidylate synthase from Polaromonas naphthalenivorans (strain CJ2).